A 424-amino-acid polypeptide reads, in one-letter code: Proline--tRNA ligase (424 aa).

Belongs to the class-II aminoacyl-tRNA synthetase family. ProS type 2 subfamily. In terms of assembly, homodimer.

The protein localises to the cytoplasm. The catalysed reaction is tRNA(Pro) + L-proline + ATP = L-prolyl-tRNA(Pro) + AMP + diphosphate. Its function is as follows. Catalyzes the attachment of proline to tRNA(Pro) in a two-step reaction: proline is first activated by ATP to form Pro-AMP and then transferred to the acceptor end of tRNA(Pro). The chain is Proline--tRNA ligase from Ehrlichia chaffeensis (strain ATCC CRL-10679 / Arkansas).